We begin with the raw amino-acid sequence, 167 residues long: Crossover junction endodeoxyribonuclease RuvC (167 aa).

Active-site residues include Asp7, Glu67, and Asp139. Mg(2+) contacts are provided by Asp7, Glu67, and Asp139.

It belongs to the RuvC family. As to quaternary structure, homodimer which binds Holliday junction (HJ) DNA. The HJ becomes 2-fold symmetrical on binding to RuvC with unstacked arms; it has a different conformation from HJ DNA in complex with RuvA. In the full resolvosome a probable DNA-RuvA(4)-RuvB(12)-RuvC(2) complex forms which resolves the HJ. Requires Mg(2+) as cofactor.

The protein localises to the cytoplasm. It carries out the reaction Endonucleolytic cleavage at a junction such as a reciprocal single-stranded crossover between two homologous DNA duplexes (Holliday junction).. Its function is as follows. The RuvA-RuvB-RuvC complex processes Holliday junction (HJ) DNA during genetic recombination and DNA repair. Endonuclease that resolves HJ intermediates. Cleaves cruciform DNA by making single-stranded nicks across the HJ at symmetrical positions within the homologous arms, yielding a 5'-phosphate and a 3'-hydroxyl group; requires a central core of homology in the junction. The consensus cleavage sequence is 5'-(A/T)TT(C/G)-3'. Cleavage occurs on the 3'-side of the TT dinucleotide at the point of strand exchange. HJ branch migration catalyzed by RuvA-RuvB allows RuvC to scan DNA until it finds its consensus sequence, where it cleaves and resolves the cruciform DNA. This chain is Crossover junction endodeoxyribonuclease RuvC, found in Akkermansia muciniphila (strain ATCC BAA-835 / DSM 22959 / JCM 33894 / BCRC 81048 / CCUG 64013 / CIP 107961 / Muc).